We begin with the raw amino-acid sequence, 456 residues long: Bifunctional protein GlmU (456 aa).

The segment at 1–228 (MPQNTLNIVI…SYLAAGVNNK (228 aa)) is pyrophosphorylase. UDP-N-acetyl-alpha-D-glucosamine is bound by residues 11–14 (LAAG), K25, Q75, 80–81 (GT), 102–104 (YGD), G138, E153, N168, and N226. D104 contributes to the Mg(2+) binding site. Position 226 (N226) interacts with Mg(2+). The segment at 229-249 (LQLAELERIFQTEQAQELLKA) is linker. The N-acetyltransferase stretch occupies residues 250-456 (GVTLSDPARF…GWVRPEKDKQ (207 aa)). UDP-N-acetyl-alpha-D-glucosamine contacts are provided by R332 and K350. Residue H362 is the Proton acceptor of the active site. Residues Y365 and N376 each coordinate UDP-N-acetyl-alpha-D-glucosamine. Residues A379, 385-386 (NY), S404, A422, and R439 contribute to the acetyl-CoA site.

It in the N-terminal section; belongs to the N-acetylglucosamine-1-phosphate uridyltransferase family. The protein in the C-terminal section; belongs to the transferase hexapeptide repeat family. As to quaternary structure, homotrimer. It depends on Mg(2+) as a cofactor.

Its subcellular location is the cytoplasm. The catalysed reaction is alpha-D-glucosamine 1-phosphate + acetyl-CoA = N-acetyl-alpha-D-glucosamine 1-phosphate + CoA + H(+). The enzyme catalyses N-acetyl-alpha-D-glucosamine 1-phosphate + UTP + H(+) = UDP-N-acetyl-alpha-D-glucosamine + diphosphate. The protein operates within nucleotide-sugar biosynthesis; UDP-N-acetyl-alpha-D-glucosamine biosynthesis; N-acetyl-alpha-D-glucosamine 1-phosphate from alpha-D-glucosamine 6-phosphate (route II): step 2/2. It participates in nucleotide-sugar biosynthesis; UDP-N-acetyl-alpha-D-glucosamine biosynthesis; UDP-N-acetyl-alpha-D-glucosamine from N-acetyl-alpha-D-glucosamine 1-phosphate: step 1/1. It functions in the pathway bacterial outer membrane biogenesis; LPS lipid A biosynthesis. Its function is as follows. Catalyzes the last two sequential reactions in the de novo biosynthetic pathway for UDP-N-acetylglucosamine (UDP-GlcNAc). The C-terminal domain catalyzes the transfer of acetyl group from acetyl coenzyme A to glucosamine-1-phosphate (GlcN-1-P) to produce N-acetylglucosamine-1-phosphate (GlcNAc-1-P), which is converted into UDP-GlcNAc by the transfer of uridine 5-monophosphate (from uridine 5-triphosphate), a reaction catalyzed by the N-terminal domain. This chain is Bifunctional protein GlmU, found in Neisseria meningitidis serogroup C / serotype 2a (strain ATCC 700532 / DSM 15464 / FAM18).